Consider the following 319-residue polypeptide: ATP-dependent 6-phosphofructokinase (319 aa).

An ATP-binding site is contributed by Gly-11. 21-25 (RAVVR) is a binding site for ADP. ATP-binding positions include 72–73 (RS) and 102–105 (GDGS). A Mg(2+)-binding site is contributed by Asp-103. 125 to 127 (TID) is a substrate binding site. The active-site Proton acceptor is Asp-127. ADP is bound at residue Arg-154. Residues Arg-162 and 169–171 (MGR) contribute to the substrate site. Residues 185-187 (GAE) and 213-215 (KMH) each bind ADP. Residues Glu-222, Arg-243, and 249–252 (HIQR) each bind substrate.

The protein belongs to the phosphofructokinase type A (PFKA) family. ATP-dependent PFK group I subfamily. Prokaryotic clade 'B1' sub-subfamily. Homotetramer. The cofactor is Mg(2+).

Its subcellular location is the cytoplasm. It carries out the reaction beta-D-fructose 6-phosphate + ATP = beta-D-fructose 1,6-bisphosphate + ADP + H(+). The protein operates within carbohydrate degradation; glycolysis; D-glyceraldehyde 3-phosphate and glycerone phosphate from D-glucose: step 3/4. Allosterically activated by ADP and other diphosphonucleosides, and allosterically inhibited by phosphoenolpyruvate. In terms of biological role, catalyzes the phosphorylation of D-fructose 6-phosphate to fructose 1,6-bisphosphate by ATP, the first committing step of glycolysis. This is ATP-dependent 6-phosphofructokinase from Clostridium tetani (strain Massachusetts / E88).